Reading from the N-terminus, the 30-residue chain is Trypsin inhibitor 3 (30 aa).

Disulfide bonds link cysteine 4–cysteine 21, cysteine 11–cysteine 23, and cysteine 17–cysteine 29.

It belongs to the protease inhibitor I7 (squash-type serine protease inhibitor) family.

It is found in the secreted. Inhibits trypsin. The protein is Trypsin inhibitor 3 of Momordica charantia (Bitter gourd).